The following is a 454-amino-acid chain: L-serine dehydratase 1 (454 aa).

Belongs to the iron-sulfur dependent L-serine dehydratase family. The cofactor is [4Fe-4S] cluster. In terms of processing, activated by post-translational modification by a system involving at least three gene products. Activation is mimicked in vitro by iron and dithiothreitol. There is considerable evidence for a free-radical activation mechanism.

It catalyses the reaction L-serine = pyruvate + NH4(+). The protein operates within carbohydrate biosynthesis; gluconeogenesis. Its function is as follows. Also deaminates threonine, particularly when it is present in high concentration. The chain is L-serine dehydratase 1 (sdaA) from Escherichia coli (strain K12).